Reading from the N-terminus, the 1067-residue chain is Isoleucine--tRNA ligase (1067 aa).

Positions 49–59 match the 'HIGH' region motif; that stretch reads PYVSGAIHLGT. Positions 625-629 match the 'KMSKS' region motif; that stretch reads KMSKS. Lys628 contacts ATP.

It belongs to the class-I aminoacyl-tRNA synthetase family. IleS type 2 subfamily. In terms of assembly, monomer. Requires Zn(2+) as cofactor.

Its subcellular location is the cytoplasm. It carries out the reaction tRNA(Ile) + L-isoleucine + ATP = L-isoleucyl-tRNA(Ile) + AMP + diphosphate. Its function is as follows. Catalyzes the attachment of isoleucine to tRNA(Ile). As IleRS can inadvertently accommodate and process structurally similar amino acids such as valine, to avoid such errors it has two additional distinct tRNA(Ile)-dependent editing activities. One activity is designated as 'pretransfer' editing and involves the hydrolysis of activated Val-AMP. The other activity is designated 'posttransfer' editing and involves deacylation of mischarged Val-tRNA(Ile). The sequence is that of Isoleucine--tRNA ligase from Pyrococcus abyssi (strain GE5 / Orsay).